A 455-amino-acid polypeptide reads, in one-letter code: Bifunctional protein GlmU (455 aa).

The pyrophosphorylase stretch occupies residues 1–225; that stretch reads MNIVILAAGL…EWETLGVNSK (225 aa). Residues 6-9, Lys20, Gln71, 76-77, 98-100, Gly135, Glu150, Asn165, and Asn223 each bind UDP-N-acetyl-alpha-D-glucosamine; these read LAAG, GT, and YGD. Asp100 serves as a coordination point for Mg(2+). Residue Asn223 participates in Mg(2+) binding. Residues 226–246 form a linker region; the sequence is VQLAELERIHQRNLAQQLLED. Residues 247 to 455 are N-acetyltransferase; the sequence is GVTLIDPARI…QRPVKQKKDA (209 aa). Residues Arg329 and Lys347 each coordinate UDP-N-acetyl-alpha-D-glucosamine. His359 acts as the Proton acceptor in catalysis. UDP-N-acetyl-alpha-D-glucosamine contacts are provided by Tyr362 and Asn373. Acetyl-CoA contacts are provided by residues Ala376, 382-383, Ser401, Ala419, and Arg436; that span reads NY.

In the N-terminal section; belongs to the N-acetylglucosamine-1-phosphate uridyltransferase family. This sequence in the C-terminal section; belongs to the transferase hexapeptide repeat family. Homotrimer. Mg(2+) is required as a cofactor.

The protein resides in the cytoplasm. The enzyme catalyses alpha-D-glucosamine 1-phosphate + acetyl-CoA = N-acetyl-alpha-D-glucosamine 1-phosphate + CoA + H(+). The catalysed reaction is N-acetyl-alpha-D-glucosamine 1-phosphate + UTP + H(+) = UDP-N-acetyl-alpha-D-glucosamine + diphosphate. The protein operates within nucleotide-sugar biosynthesis; UDP-N-acetyl-alpha-D-glucosamine biosynthesis; N-acetyl-alpha-D-glucosamine 1-phosphate from alpha-D-glucosamine 6-phosphate (route II): step 2/2. It functions in the pathway nucleotide-sugar biosynthesis; UDP-N-acetyl-alpha-D-glucosamine biosynthesis; UDP-N-acetyl-alpha-D-glucosamine from N-acetyl-alpha-D-glucosamine 1-phosphate: step 1/1. Its pathway is bacterial outer membrane biogenesis; LPS lipid A biosynthesis. Catalyzes the last two sequential reactions in the de novo biosynthetic pathway for UDP-N-acetylglucosamine (UDP-GlcNAc). The C-terminal domain catalyzes the transfer of acetyl group from acetyl coenzyme A to glucosamine-1-phosphate (GlcN-1-P) to produce N-acetylglucosamine-1-phosphate (GlcNAc-1-P), which is converted into UDP-GlcNAc by the transfer of uridine 5-monophosphate (from uridine 5-triphosphate), a reaction catalyzed by the N-terminal domain. The chain is Bifunctional protein GlmU from Ralstonia nicotianae (strain ATCC BAA-1114 / GMI1000) (Ralstonia solanacearum).